Consider the following 471-residue polypeptide: UDP-N-acetylmuramate--L-alanine ligase (471 aa).

114-120 lines the ATP pocket; sequence GTHGKTT.

The protein belongs to the MurCDEF family.

The protein localises to the cytoplasm. It carries out the reaction UDP-N-acetyl-alpha-D-muramate + L-alanine + ATP = UDP-N-acetyl-alpha-D-muramoyl-L-alanine + ADP + phosphate + H(+). Its pathway is cell wall biogenesis; peptidoglycan biosynthesis. Cell wall formation. This chain is UDP-N-acetylmuramate--L-alanine ligase, found in Methylobacterium nodulans (strain LMG 21967 / CNCM I-2342 / ORS 2060).